Reading from the N-terminus, the 155-residue chain is uncharacterized protein (155 aa).

Residues 1–155 (MIVKYIKGDI…IVIVDWEPLL (155 aa)) form the Macro domain.

This is an uncharacterized protein from Escherichia coli (Bacteriophage T4).